A 254-amino-acid polypeptide reads, in one-letter code: 4-hydroxy-tetrahydrodipicolinate reductase (254 aa).

7 to 12 provides a ligand contact to NAD(+); it reads GASGRI. Residue Arg-35 coordinates NADP(+). NAD(+) contacts are provided by residues 91-93 and 115-118; these read GTT and AHNM. The Proton donor/acceptor role is filled by His-147. His-148 is a (S)-2,3,4,5-tetrahydrodipicolinate binding site. The active-site Proton donor is the Lys-151. Residue 157-158 coordinates (S)-2,3,4,5-tetrahydrodipicolinate; that stretch reads GT.

It belongs to the DapB family.

It localises to the cytoplasm. The enzyme catalyses (S)-2,3,4,5-tetrahydrodipicolinate + NAD(+) + H2O = (2S,4S)-4-hydroxy-2,3,4,5-tetrahydrodipicolinate + NADH + H(+). The catalysed reaction is (S)-2,3,4,5-tetrahydrodipicolinate + NADP(+) + H2O = (2S,4S)-4-hydroxy-2,3,4,5-tetrahydrodipicolinate + NADPH + H(+). It functions in the pathway amino-acid biosynthesis; L-lysine biosynthesis via DAP pathway; (S)-tetrahydrodipicolinate from L-aspartate: step 4/4. Catalyzes the conversion of 4-hydroxy-tetrahydrodipicolinate (HTPA) to tetrahydrodipicolinate. This Helicobacter pylori (strain ATCC 700392 / 26695) (Campylobacter pylori) protein is 4-hydroxy-tetrahydrodipicolinate reductase.